We begin with the raw amino-acid sequence, 673 residues long: Transcription initiation factor IIB (673 aa).

Residues 38-69 form a TFIIB-type zinc finger; it reads EEIVCPICGSKEVVKDYERAEIVCAKCGCVIK. Residues C42, C45, C61, and C64 each coordinate Zn(2+). The region spanning 238-357 is the DOD-type homing endonuclease domain; sequence ILGYIIAEGY…VIFLLLQIKE (120 aa). 2 consecutive repeat copies span residues 490 to 573 and 584 to 665.

Belongs to the TFIIB family. In terms of processing, this protein undergoes a protein self splicing that involves a post-translational excision of the intervening region (intein) followed by peptide ligation.

Its function is as follows. Stabilizes TBP binding to an archaeal box-A promoter. Also responsible for recruiting RNA polymerase II to the pre-initiation complex (DNA-TBP-TFIIB). The protein is Transcription initiation factor IIB (tfb) of Methanocaldococcus jannaschii (strain ATCC 43067 / DSM 2661 / JAL-1 / JCM 10045 / NBRC 100440) (Methanococcus jannaschii).